The following is a 282-amino-acid chain: Nucleotide-binding protein XCV3122 (282 aa).

ATP is bound at residue 5–12 (GLSGSGKS). 57-60 (DVRS) is a binding site for GTP.

This sequence belongs to the RapZ-like family.

Displays ATPase and GTPase activities. In Xanthomonas euvesicatoria pv. vesicatoria (strain 85-10) (Xanthomonas campestris pv. vesicatoria), this protein is Nucleotide-binding protein XCV3122.